A 332-amino-acid polypeptide reads, in one-letter code: Glycerol-3-phosphate dehydrogenase [NAD(P)+] (332 aa).

5 residues coordinate NADPH: Ser11, Trp12, Arg32, Arg33, and Lys106. Residues Lys106 and Gly136 each coordinate sn-glycerol 3-phosphate. NADPH is bound at residue Ala140. Sn-glycerol 3-phosphate contacts are provided by Lys191, Asp244, Ser254, Arg255, and Asn256. Lys191 acts as the Proton acceptor in catalysis. An NADPH-binding site is contributed by Arg255. The NADPH site is built by Val280 and Glu282.

It belongs to the NAD-dependent glycerol-3-phosphate dehydrogenase family.

It is found in the cytoplasm. The catalysed reaction is sn-glycerol 3-phosphate + NAD(+) = dihydroxyacetone phosphate + NADH + H(+). It catalyses the reaction sn-glycerol 3-phosphate + NADP(+) = dihydroxyacetone phosphate + NADPH + H(+). It participates in membrane lipid metabolism; glycerophospholipid metabolism. Functionally, catalyzes the reduction of the glycolytic intermediate dihydroxyacetone phosphate (DHAP) to sn-glycerol 3-phosphate (G3P), the key precursor for phospholipid synthesis. This is Glycerol-3-phosphate dehydrogenase [NAD(P)+] from Corynebacterium urealyticum (strain ATCC 43042 / DSM 7109).